A 113-amino-acid chain; its full sequence is Large ribosomal subunit protein bL17 (113 aa).

It belongs to the bacterial ribosomal protein bL17 family. As to quaternary structure, part of the 50S ribosomal subunit. Contacts protein L32.

This Caldicellulosiruptor bescii (strain ATCC BAA-1888 / DSM 6725 / KCTC 15123 / Z-1320) (Anaerocellum thermophilum) protein is Large ribosomal subunit protein bL17.